An 89-amino-acid chain; its full sequence is Small ribosomal subunit protein uS15 (89 aa).

The protein belongs to the universal ribosomal protein uS15 family. In terms of assembly, part of the 30S ribosomal subunit. Forms a bridge to the 50S subunit in the 70S ribosome, contacting the 23S rRNA.

One of the primary rRNA binding proteins, it binds directly to 16S rRNA where it helps nucleate assembly of the platform of the 30S subunit by binding and bridging several RNA helices of the 16S rRNA. Its function is as follows. Forms an intersubunit bridge (bridge B4) with the 23S rRNA of the 50S subunit in the ribosome. The chain is Small ribosomal subunit protein uS15 from Paramagnetospirillum magneticum (strain ATCC 700264 / AMB-1) (Magnetospirillum magneticum).